The sequence spans 209 residues: Small ribosomal subunit protein uS4 (209 aa).

Residues 1-13 (MSTKSRTRSKTRL) show a composition bias toward basic residues. 2 disordered regions span residues 1–20 (MSTKSRTRSKTRLSRALGIP) and 28–49 (YLEKRPYAPGEHGRSKRKQDSD). One can recognise an S4 RNA-binding domain in the interval 95–176 (QRLDALVVRS…PKLPSYLEVE (82 aa)).

Belongs to the universal ribosomal protein uS4 family. Part of the 30S ribosomal subunit. Contacts protein S5. The interaction surface between S4 and S5 is involved in control of translational fidelity.

One of the primary rRNA binding proteins, it binds directly to 16S rRNA where it nucleates assembly of the body of the 30S subunit. In terms of biological role, with S5 and S12 plays an important role in translational accuracy. The polypeptide is Small ribosomal subunit protein uS4 (Clavibacter michiganensis subsp. michiganensis (strain NCPPB 382)).